A 1036-amino-acid chain; its full sequence is Non-canonical non-ribosomal peptide synthetase FUB8 (1036 aa).

The segment at 21-343 (EIARDEPDRV…LASVVTHPDE (323 aa)) is adenylation (A) domain. Positions 544 to 621 (TTEDVVRSGI…QLAHTVWSHL (78 aa)) constitute a Carrier domain. Ser-579 carries the O-(pantetheine 4'-phosphoryl)serine modification. A thioester reductase (TR) domain region spans residues 658 to 899 (LTGTTGEIGS…IPIDLLTEVI (242 aa)).

Its pathway is mycotoxin biosynthesis. Functionally, non-canonical non-ribosomal peptide synthetase; part of the gene cluster that mediates the biosynthesis of fusaric acid, a mycotoxin with low to moderate toxicity to animals and humans, but with high phytotoxic properties. L-aspartate is suggested as fusaric acid amino acid precursor that is activated and further processed to O-acetyl-L-homoserine by cluster enzymes aspartate kinase FUB3 and homoserine O-acetyltransferase FUB5, as well as enzymes of the primary metabolism. The polyketide synthase (PKS) FUB1 generates the triketide trans-2-hexenal which is presumptively released by the hydrolase FUB4 and linked to the NRPS-bound amino acid precursor by NAD(P)-dependent dehydrogenase FUB6. FUB1, FUB4, and the non-canonical NRPS Fub8 may form an enzyme complex. Further processing of the NRPS-bound intermediate might be carried out by FUB6 and the sulfhydrylase FUB7, enabling a spontaneous electrocyclization to close the carbon backbone of fusaric acid. Dihydrofusaric acid is likely to be released via reduction by the thioester reductase (TR) domain of FUB8 whereupon the final oxidation to fusaric acid may (also) be performed by the FMN-dependent dehydrogenase FUB9. In Fusarium oxysporum f. sp. lycopersici (strain 4287 / CBS 123668 / FGSC 9935 / NRRL 34936) (Fusarium vascular wilt of tomato), this protein is Non-canonical non-ribosomal peptide synthetase FUB8.